The chain runs to 525 residues: GMP synthase [glutamine-hydrolyzing] (525 aa).

The 199-residue stretch at 9–207 (RILILDFGSQ…VRDICQCEAL (199 aa)) folds into the Glutamine amidotransferase type-1 domain. The active-site Nucleophile is the Cys86. Active-site residues include His181 and Glu183. The GMPS ATP-PPase domain maps to 208 to 400 (WTPAKIIDDA…LGLPYDMLYR (193 aa)). ATP is bound at residue 235 to 241 (SGGVDSS).

Homodimer.

It catalyses the reaction XMP + L-glutamine + ATP + H2O = GMP + L-glutamate + AMP + diphosphate + 2 H(+). It functions in the pathway purine metabolism; GMP biosynthesis; GMP from XMP (L-Gln route): step 1/1. In terms of biological role, catalyzes the synthesis of GMP from XMP. The sequence is that of GMP synthase [glutamine-hydrolyzing] from Shigella sonnei (strain Ss046).